A 257-amino-acid chain; its full sequence is Snake venom serine protease salmonase (257 aa).

The signal sequence occupies residues 1-18 (MVLIRVLVNFLILQLSYA). A propeptide spanning residues 19–24 (QKSSEL) is cleaved from the precursor. Residues 25–248 (VIGGDECNIN…YIDWIQSIIA (224 aa)) enclose the Peptidase S1 domain. 5 cysteine pairs are disulfide-bonded: Cys-31-Cys-162, Cys-49-Cys-65, Cys-141-Cys-209, Cys-173-Cys-188, and Cys-199-Cys-224. His-64 acts as the Charge relay system in catalysis. Asn-78 carries an N-linked (GlcNAc...) asparagine glycan. The active-site Charge relay system is Asp-109. The active-site Charge relay system is the Ser-203.

It belongs to the peptidase S1 family. Snake venom subfamily. In terms of assembly, monomer. Expressed by the venom gland.

Its subcellular location is the secreted. Functionally, snake venom serine protease that may act in the hemostasis system of the prey. This chain is Snake venom serine protease salmonase, found in Gloydius brevicauda (Korean slamosa snake).